The chain runs to 200 residues: Lipopolysaccharide core heptose(II)-phosphate phosphatase (200 aa).

Residues 1 to 25 form the signal peptide; that stretch reads MLAFCRSSLKSKKYFIILLALAAIA.

Belongs to the phosphoglycerate mutase family. Ais subfamily.

It localises to the periplasm. It participates in bacterial outer membrane biogenesis; lipopolysaccharide metabolism. Functionally, catalyzes the dephosphorylation of heptose(II) of the outer membrane lipopolysaccharide core. This Escherichia coli O7:K1 (strain IAI39 / ExPEC) protein is Lipopolysaccharide core heptose(II)-phosphate phosphatase.